The chain runs to 194 residues: Small ribosomal subunit protein uS4c (194 aa).

Residues 13-36 (GLTSKRPRSGSDPKNQLRSGKKSQ) are disordered. In terms of domain architecture, S4 RNA-binding spans 82 to 143 (MRLDNILFRL…KQRSKALIQN (62 aa)).

This sequence belongs to the universal ribosomal protein uS4 family. In terms of assembly, part of the 30S ribosomal subunit. Contacts protein S5. The interaction surface between S4 and S5 is involved in control of translational fidelity.

It localises to the plastid. It is found in the chloroplast. One of the primary rRNA binding proteins, it binds directly to 16S rRNA where it nucleates assembly of the body of the 30S subunit. In terms of biological role, with S5 and S12 plays an important role in translational accuracy. This Moraea spathulata (Large yellow moraea) protein is Small ribosomal subunit protein uS4c (rps4).